Here is a 356-residue protein sequence, read N- to C-terminus: S-adenosylmethionine:tRNA ribosyltransferase-isomerase (356 aa).

The protein belongs to the QueA family. Monomer.

The protein localises to the cytoplasm. It catalyses the reaction 7-aminomethyl-7-carbaguanosine(34) in tRNA + S-adenosyl-L-methionine = epoxyqueuosine(34) in tRNA + adenine + L-methionine + 2 H(+). It participates in tRNA modification; tRNA-queuosine biosynthesis. Functionally, transfers and isomerizes the ribose moiety from AdoMet to the 7-aminomethyl group of 7-deazaguanine (preQ1-tRNA) to give epoxyqueuosine (oQ-tRNA). This Shigella dysenteriae serotype 1 (strain Sd197) protein is S-adenosylmethionine:tRNA ribosyltransferase-isomerase.